We begin with the raw amino-acid sequence, 252 residues long: Trans-aconitate 2-methyltransferase (252 aa).

The protein belongs to the methyltransferase superfamily. Tam family.

The protein resides in the cytoplasm. It catalyses the reaction trans-aconitate + S-adenosyl-L-methionine = (E)-3-(methoxycarbonyl)pent-2-enedioate + S-adenosyl-L-homocysteine. Its function is as follows. Catalyzes the S-adenosylmethionine monomethyl esterification of trans-aconitate. This Shigella dysenteriae serotype 1 (strain Sd197) protein is Trans-aconitate 2-methyltransferase.